A 500-amino-acid polypeptide reads, in one-letter code: Histidine ammonia-lyase (500 aa).

The segment at residues 141 to 143 (ASG) is a cross-link (5-imidazolinone (Ala-Gly)). Ser142 carries the post-translational modification 2,3-didehydroalanine (Ser).

This sequence belongs to the PAL/histidase family. Post-translationally, contains an active site 4-methylidene-imidazol-5-one (MIO), which is formed autocatalytically by cyclization and dehydration of residues Ala-Ser-Gly.

The protein resides in the cytoplasm. It catalyses the reaction L-histidine = trans-urocanate + NH4(+). The protein operates within amino-acid degradation; L-histidine degradation into L-glutamate; N-formimidoyl-L-glutamate from L-histidine: step 1/3. The protein is Histidine ammonia-lyase of Shouchella clausii (strain KSM-K16) (Alkalihalobacillus clausii).